A 140-amino-acid polypeptide reads, in one-letter code: Nucleoside diphosphate kinase (140 aa).

6 residues coordinate ATP: Lys-11, Phe-59, Arg-87, Thr-93, Arg-104, and Asn-114. The Pros-phosphohistidine intermediate role is filled by His-117.

The protein belongs to the NDK family. Homotetramer. It depends on Mg(2+) as a cofactor.

The protein resides in the cytoplasm. It catalyses the reaction a 2'-deoxyribonucleoside 5'-diphosphate + ATP = a 2'-deoxyribonucleoside 5'-triphosphate + ADP. The enzyme catalyses a ribonucleoside 5'-diphosphate + ATP = a ribonucleoside 5'-triphosphate + ADP. Functionally, major role in the synthesis of nucleoside triphosphates other than ATP. The ATP gamma phosphate is transferred to the NDP beta phosphate via a ping-pong mechanism, using a phosphorylated active-site intermediate. In Rhodospirillum rubrum (strain ATCC 11170 / ATH 1.1.1 / DSM 467 / LMG 4362 / NCIMB 8255 / S1), this protein is Nucleoside diphosphate kinase.